The sequence spans 276 residues: MEPSTSTRKHFTINDFEIGRPLGRGKFGRVYLARLKENHFIVALKVLFKSEIEKEGLEHQLRREVEIQAHLQHRNILRLYNYFYDDTRIYLILEYAPGGELYKELQRHQKLDQQRTATIIQELSDALTYCHEKKVIHRDIKPENLLLGLNGEVKISDFGWSVHTPSLRRKTMCGTLDYLPPEMIAQKPYNEMVDLWCIGVLCYELLVGKPPFESSTSSETYRRIRQVDFKFPSSVPAGAQDLISKLLRYHPSERLSLAQVLKHPWVREHSRRVLPC.

The region spanning 16–266 (FEIGRPLGRG…LAQVLKHPWV (251 aa)) is the Protein kinase domain. ATP-binding positions include 22–30 (LGRGKFGRV) and lysine 45. Residue aspartate 139 is the Proton acceptor of the active site. Phosphothreonine; by PKA is present on threonine 171.

Belongs to the protein kinase superfamily. Ser/Thr protein kinase family. Aurora subfamily. As to quaternary structure, component of the chromosomal passenger complex (CPC) composed of at least BIRC5/survivin, CDCA8/borealin, INCENP, AURKB or AURKC; predominantly independent AURKB- and AURKC-containing complexes exist; in the complex interacts directly with BIRC5/survivin and INCENP. Interacts with TACC1. Expressed only in testis.

It is found in the nucleus. Its subcellular location is the chromosome. The protein resides in the centromere. The protein localises to the cytoplasm. It localises to the cytoskeleton. It is found in the spindle. It catalyses the reaction L-seryl-[protein] + ATP = O-phospho-L-seryl-[protein] + ADP + H(+). It carries out the reaction L-threonyl-[protein] + ATP = O-phospho-L-threonyl-[protein] + ADP + H(+). Okadaic acid, an inhibitor of protein phosphatase 1 (PP1), protein phosphatase 2A (PP2A) and protein phosphatase 5 (PP5), increases AURKC activity. AURKC is also stabilized through its interaction with INCENP, which also acts as an activator. Functionally, serine/threonine-protein kinase component of the chromosomal passenger complex (CPC), a complex that acts as a key regulator of mitosis. The CPC complex has essential functions at the centromere in ensuring correct chromosome alignment and segregation and is required for chromatin-induced microtubule stabilization and spindle assembly. Also plays a role in meiosis and more particularly in spermatogenesis. Has redundant cellular functions with AURKB and can rescue an AURKB knockdown. Like AURKB, AURKC phosphorylates histone H3 at 'Ser-10' and 'Ser-28'. AURKC phosphorylates the CPC complex subunits BIRC5/survivin and INCENP leading to increased AURKC activity. Phosphorylates TACC1, another protein involved in cell division, at 'Ser-228'. The protein is Aurora kinase C (Aurkc) of Mus musculus (Mouse).